The primary structure comprises 270 residues: Type III pantothenate kinase (270 aa).

11 to 18 is a binding site for ATP; that stretch reads DAGNSRIK. Residues Tyr96 and 103 to 106 each bind substrate; that span reads GSDR. Asp105 acts as the Proton acceptor in catalysis. Residue Thr129 participates in ATP binding. Thr195 is a substrate binding site.

The protein belongs to the type III pantothenate kinase family. Homodimer. NH4(+) is required as a cofactor. The cofactor is K(+).

The protein resides in the cytoplasm. The enzyme catalyses (R)-pantothenate + ATP = (R)-4'-phosphopantothenate + ADP + H(+). It functions in the pathway cofactor biosynthesis; coenzyme A biosynthesis; CoA from (R)-pantothenate: step 1/5. Functionally, catalyzes the phosphorylation of pantothenate (Pan), the first step in CoA biosynthesis. In Paraburkholderia phytofirmans (strain DSM 17436 / LMG 22146 / PsJN) (Burkholderia phytofirmans), this protein is Type III pantothenate kinase.